The primary structure comprises 248 residues: Triosephosphate isomerase (248 aa).

9-11 (NWK) provides a ligand contact to substrate. His-94 serves as the catalytic Electrophile. The active-site Proton acceptor is Glu-166. Substrate is bound by residues Gly-172, Ser-211, and 232 to 233 (GG).

This sequence belongs to the triosephosphate isomerase family. In terms of assembly, homodimer.

It localises to the cytoplasm. The enzyme catalyses D-glyceraldehyde 3-phosphate = dihydroxyacetone phosphate. It participates in carbohydrate biosynthesis; gluconeogenesis. It functions in the pathway carbohydrate degradation; glycolysis; D-glyceraldehyde 3-phosphate from glycerone phosphate: step 1/1. Its function is as follows. Involved in the gluconeogenesis. Catalyzes stereospecifically the conversion of dihydroxyacetone phosphate (DHAP) to D-glyceraldehyde-3-phosphate (G3P). This is Triosephosphate isomerase from Ruthia magnifica subsp. Calyptogena magnifica.